Consider the following 303-residue polypeptide: Signal recognition particle receptor FtsY (303 aa).

Residues 108 to 115 (GVNGAGKT), 190 to 194 (DTAGR), and 254 to 257 (TKLD) each bind GTP.

This sequence belongs to the GTP-binding SRP family. FtsY subfamily. In terms of assembly, part of the signal recognition particle protein translocation system, which is composed of SRP and FtsY. SRP is a ribonucleoprotein composed of Ffh and a 4.5S RNA molecule.

It is found in the cell inner membrane. It localises to the cytoplasm. It carries out the reaction GTP + H2O = GDP + phosphate + H(+). In terms of biological role, involved in targeting and insertion of nascent membrane proteins into the cytoplasmic membrane. Acts as a receptor for the complex formed by the signal recognition particle (SRP) and the ribosome-nascent chain (RNC). Interaction with SRP-RNC leads to the transfer of the RNC complex to the Sec translocase for insertion into the membrane, the hydrolysis of GTP by both Ffh and FtsY, and the dissociation of the SRP-FtsY complex into the individual components. This chain is Signal recognition particle receptor FtsY, found in Rickettsia bellii (strain RML369-C).